Reading from the N-terminus, the 1303-residue chain is Phosphoribosylformylglycinamidine synthase (1303 aa).

Residues 308–319 (GASTGSGGEIRD) and A679 contribute to the ATP site. Residues E719, N723, and D892 each coordinate Mg(2+). Positions 1003–1023 (LRDNPACADQEHEAKKDNSDP) are disordered. Positions 1011–1021 (DQEHEAKKDNS) are enriched in basic and acidic residues. The Glutamine amidotransferase type-1 domain maps to 1050–1303 (MAILREQGVN…MFQNARKNIG (254 aa)). C1143 acts as the Nucleophile in catalysis. Active-site residues include H1268 and E1270.

In the N-terminal section; belongs to the FGAMS family. As to quaternary structure, monomer.

The protein localises to the cytoplasm. It catalyses the reaction N(2)-formyl-N(1)-(5-phospho-beta-D-ribosyl)glycinamide + L-glutamine + ATP + H2O = 2-formamido-N(1)-(5-O-phospho-beta-D-ribosyl)acetamidine + L-glutamate + ADP + phosphate + H(+). The protein operates within purine metabolism; IMP biosynthesis via de novo pathway; 5-amino-1-(5-phospho-D-ribosyl)imidazole from N(2)-formyl-N(1)-(5-phospho-D-ribosyl)glycinamide: step 1/2. Phosphoribosylformylglycinamidine synthase involved in the purines biosynthetic pathway. Catalyzes the ATP-dependent conversion of formylglycinamide ribonucleotide (FGAR) and glutamine to yield formylglycinamidine ribonucleotide (FGAM) and glutamate. This is Phosphoribosylformylglycinamidine synthase from Aliivibrio fischeri (strain ATCC 700601 / ES114) (Vibrio fischeri).